The following is a 492-amino-acid chain: Peptidyl-prolyl cis-trans isomerase-like 4 (492 aa).

The region spanning 1–161 (MAVLLETTLG…QDIRINHTVI (161 aa)) is the PPIase cyclophilin-type domain. The disordered stretch occupies residues 167-188 (DDPPDLLIPDRSPEPTREQLDS). Basic and acidic residues predominate over residues 177 to 187 (RSPEPTREQLD). S178 is subject to Phosphoserine. Position 182 is a phosphothreonine (T182). Residues K201, K212, and K218 each participate in a glycyl lysine isopeptide (Lys-Gly) (interchain with G-Cter in SUMO2) cross-link. The RRM domain maps to 240–318 (NVLFVCKLNP…RRIHVDFSQS (79 aa)). Glycyl lysine isopeptide (Lys-Gly) (interchain with G-Cter in SUMO2) cross-links involve residues K321 and K362. 2 disordered regions span residues 368–406 (DEQA…PIKN) and 423–492 (EESC…SKYR). The segment covering 377–390 (SHSHTSKKHKKKTH) has biased composition (basic residues). S393 bears the Phosphoserine mark. Residue K405 forms a Glycyl lysine isopeptide (Lys-Gly) (interchain with G-Cter in SUMO2) linkage. Basic and acidic residues predominate over residues 426–452 (CWEKQKSEKRDRTQNRSRSRSRERDGH). A Glycyl lysine isopeptide (Lys-Gly) (interchain with G-Cter in SUMO2) cross-link involves residue K460. S471 carries the post-translational modification Phosphoserine. The segment covering 482–492 (KSKDKEKSKYR) has biased composition (basic and acidic residues).

Belongs to the cyclophilin-type PPIase family. PPIL4 subfamily. Abundantly expressed in kidney but has a ubiquitously low expression pattern in other adult tissues.

Its subcellular location is the nucleus. The enzyme catalyses [protein]-peptidylproline (omega=180) = [protein]-peptidylproline (omega=0). Functionally, PPIases accelerate the folding of proteins. It catalyzes the cis-trans isomerization of proline imidic peptide bonds in oligopeptides. The protein is Peptidyl-prolyl cis-trans isomerase-like 4 (PPIL4) of Homo sapiens (Human).